A 189-amino-acid chain; its full sequence is MKTGKELKPGTVLRIDNDPWLVQKAEFTKSGRNSAIMKTKLKNLLTGYKTETVYGADDKLDDVILDRKEATLSFINGDEYTFMDTTDYTMYELNAEDIEAVLPYIEEGMEDVCEAVFFEGRLVSVELPTTISRKVVYTENAARGDTSGKVMKPAKLANGTEISVADFIQIDEWIDIDTRDNSFKGRSKK.

This sequence belongs to the elongation factor P family.

The protein localises to the cytoplasm. Its pathway is protein biosynthesis; polypeptide chain elongation. Involved in peptide bond synthesis. Stimulates efficient translation and peptide-bond synthesis on native or reconstituted 70S ribosomes in vitro. Probably functions indirectly by altering the affinity of the ribosome for aminoacyl-tRNA, thus increasing their reactivity as acceptors for peptidyl transferase. The sequence is that of Elongation factor P from Pseudomonas putida (strain ATCC 700007 / DSM 6899 / JCM 31910 / BCRC 17059 / LMG 24140 / F1).